The sequence spans 220 residues: VQ motif-containing protein 5 (220 aa).

Positions 49–57 (FKSLVQQLT) match the VQ motif. 2 disordered regions span residues 61–80 (PCDR…PEPI) and 131–171 (HMMA…GASS). Composition is skewed to polar residues over residues 133-150 (MAQS…QSNG) and 157-171 (SWFN…GASS).

Its subcellular location is the nucleus. In terms of biological role, may function as negative regulator of plant defense. This is VQ motif-containing protein 5 from Arabidopsis thaliana (Mouse-ear cress).